Consider the following 322-residue polypeptide: DNA repair and recombination protein RadA (322 aa).

105–112 (GMYGSGKT) provides a ligand contact to ATP.

The protein belongs to the eukaryotic RecA-like protein family.

Functionally, involved in DNA repair and in homologous recombination. Binds and assemble on single-stranded DNA to form a nucleoprotein filament. Hydrolyzes ATP in a ssDNA-dependent manner and promotes DNA strand exchange between homologous DNA molecules. The chain is DNA repair and recombination protein RadA from Methanococcus maripaludis (strain C7 / ATCC BAA-1331).